A 428-amino-acid polypeptide reads, in one-letter code: Ribosomal RNA small subunit methyltransferase B (428 aa).

Residues 253-259, D276, D302, and D321 contribute to the S-adenosyl-L-methionine site; that span reads CAAPGGK. The active-site Nucleophile is the C374.

Belongs to the class I-like SAM-binding methyltransferase superfamily. RsmB/NOP family.

It localises to the cytoplasm. The enzyme catalyses cytidine(967) in 16S rRNA + S-adenosyl-L-methionine = 5-methylcytidine(967) in 16S rRNA + S-adenosyl-L-homocysteine + H(+). Its function is as follows. Specifically methylates the cytosine at position 967 (m5C967) of 16S rRNA. In Citrobacter koseri (strain ATCC BAA-895 / CDC 4225-83 / SGSC4696), this protein is Ribosomal RNA small subunit methyltransferase B.